The following is a 215-amino-acid chain: HTH-type transcriptional regulator for conjugative element R391 (215 aa).

In terms of domain architecture, HTH cro/C1-type spans 8-61; the sequence is LNHALQLTGVTQSELARRIGIKQQSISQICSGKSARSRYTMQIAEALRVNAHWL. The H-T-H motif DNA-binding region spans 19-38; sequence QSELARRIGIKQQSISQICS.

Functionally, may control the expression of the integrase and inhibit excision of the mobile element R391, and regulate the expression of other genes as well. This chain is HTH-type transcriptional regulator for conjugative element R391, found in Providencia rettgeri.